The primary structure comprises 1336 residues: Zinc finger protein 335 (1336 aa).

Disordered stretches follow at residues 1-108 (MEEN…LVHS) and 199-222 (PTST…LAQP). Composition is skewed to low complexity over residues 31 to 45 (TSEA…AATA) and 54 to 65 (SGVGQSSDSGSR). A C2H2-type 1 zinc finger spans residues 247 to 270 (FKCKMCQYRSSTKATLLRHMRERH). Disordered regions lie at residues 282–398 (AGKR…PSSS) and 415–442 (VSQS…GRPS). A compositionally biased stretch (acidic residues) spans 300-331 (EEGPEEEEEDDDIVDAGAIDDLEEDSDYNPAE). A compositionally biased stretch (low complexity) spans 339–349 (LRLQRPTPSTL). The segment covering 350-361 (RPRRRPGRPRKL) has biased composition (basic residues). The segment covering 362–373 (PRLETSDLHDGI) has biased composition (basic and acidic residues). The segment covering 378–387 (VSSQSTQSPP) has biased composition (polar residues). 8 C2H2-type zinc fingers span residues 465–487 (YLCR…VNSH), 495–517 (FKCL…MFNH), 523–545 (YKCD…AAVH), 562–584 (FPCP…MKTH), 590–612 (HMCD…LLTH), 621–643 (FKCE…QLSH), 649–672 (FKCS…AVKH), and 678–701 (FACE…RCRH). Disordered regions lie at residues 732–766 (LKQQ…TPPL) and 961–1013 (LQCG…AAAS). The segment covering 752-766 (PQEPAPFQPPETPPL) has biased composition (pro residues). S975 and S1006 each carry phosphoserine. 4 consecutive C2H2-type zinc fingers follow at residues 1018–1040 (FSCK…KRAH), 1046–1068 (FKCP…MAQH), 1074–1096 (HQCN…MLTH), and 1102–1125 (FSCH…QRLH). K1021 participates in a covalent cross-link: Glycyl lysine isopeptide (Lys-Gly) (interchain with G-Cter in SUMO2). Phosphoserine is present on S1148.

The protein belongs to the krueppel C2H2-type zinc-finger protein family. In terms of assembly, interacts with NCOA6; may enhance ligand-dependent transcriptional activation by nuclear hormone receptors. Interacts with CNOT6. Interacts with CNOT9; the interaction is direct. Component of a nuclear receptor-mediated transcription complex composed of at least ZNF335, CCAR2 and EMSY; the complex stimulates the transcription of nuclear receptor target genes such as SOX9 and HOXA1. Within the complex interacts with EMSY and interacts (via C-terminus) with CCAR2. Interacts with members of histone H3'Lys4'(H3K4) methyltransferase complexes ASH2L, CXXC1, KMT2A/MLL1, RBBP5, SETD1A and WDR5. Component of a histone methylation complex composed of at least ZNF335, RBBP5, ASH2L and WDR5; the complex may have histone H3-specific methyltransferase activity, however does not have specificity for 'Lys-4' of histone H3. Interacts with RBBP5 and WDR5. Interacts with ASHL2. Components of this complex may associate with components of the ZNF335-CCAR2-EMSY nuclear receptor-mediated transcription complex to form a complex at least composed of ZNF335, HCFC1, CCAR2, EMSY, MKI67, RBBP5, ASH2L and WDR5. Within this complex also interacts with HCFC1 and MKI67.

Its subcellular location is the nucleus. Functionally, component or associated component of some histone methyltransferase complexes may regulate transcription through recruitment of those complexes on gene promoters. Enhances ligand-dependent transcriptional activation by nuclear hormone receptors. Plays an important role in neural progenitor cell proliferation and self-renewal through the regulation of specific genes involved brain development, including REST. Also controls the expression of genes involved in somatic development and regulates, for instance, lymphoblast proliferation. The polypeptide is Zinc finger protein 335 (Znf335) (Rattus norvegicus (Rat)).